Consider the following 143-residue polypeptide: Transcription antitermination protein NusB (143 aa).

It belongs to the NusB family.

Its function is as follows. Involved in transcription antitermination. Required for transcription of ribosomal RNA (rRNA) genes. Binds specifically to the boxA antiterminator sequence of the ribosomal RNA (rrn) operons. The sequence is that of Transcription antitermination protein NusB from Buchnera aphidicola subsp. Acyrthosiphon pisum (strain APS) (Acyrthosiphon pisum symbiotic bacterium).